We begin with the raw amino-acid sequence, 101 residues long: MAAKLKKGDKVVVLTGKDKGKQGEISSVNPSAGKAIVDGVNIAIRHTKQSQSNQGGRIPQPMPIQLSNLALLDANGKATRVGFKIEDGKKVRVAKTTGDVI.

This sequence belongs to the universal ribosomal protein uL24 family. As to quaternary structure, part of the 50S ribosomal subunit.

Its function is as follows. One of two assembly initiator proteins, it binds directly to the 5'-end of the 23S rRNA, where it nucleates assembly of the 50S subunit. One of the proteins that surrounds the polypeptide exit tunnel on the outside of the subunit. The protein is Large ribosomal subunit protein uL24 of Jannaschia sp. (strain CCS1).